We begin with the raw amino-acid sequence, 859 residues long: DNA mismatch repair protein MutS (859 aa).

617-624 (GPNMGGKS) is a binding site for ATP. The segment at 799–821 (ETTSLPHEQPRAKPGKPAVPQQS) is disordered.

Belongs to the DNA mismatch repair MutS family.

In terms of biological role, this protein is involved in the repair of mismatches in DNA. It is possible that it carries out the mismatch recognition step. This protein has a weak ATPase activity. The chain is DNA mismatch repair protein MutS from Pseudomonas savastanoi pv. phaseolicola (strain 1448A / Race 6) (Pseudomonas syringae pv. phaseolicola (strain 1448A / Race 6)).